The following is a 310-amino-acid chain: Glucan endo-1,3-beta-glucosidase GI (310 aa).

Catalysis depends on E96, which acts as the Proton donor. The active-site Nucleophile is E234.

This sequence belongs to the glycosyl hydrolase 17 family. In terms of assembly, monomer. As to expression, young leaves and roots.

The catalysed reaction is Hydrolysis of (1-&gt;3)-beta-D-glucosidic linkages in (1-&gt;3)-beta-D-glucans.. May provide a degree of protection against microbial invasion of germinated barley grain through its ability to degrade fungal cell wall polysaccharides. Does not hydrolyze (1,3;1,4)-beta-D-glucans, (1,6)-beta-D-glucan, CM-cellulose, insoluble (1,3)-beta-D-glucans or aryl beta-D-glycosides. This is Glucan endo-1,3-beta-glucosidase GI from Hordeum vulgare (Barley).